The sequence spans 172 residues: Protein GrpE (172 aa).

This sequence belongs to the GrpE family. As to quaternary structure, homodimer.

It localises to the cytoplasm. Participates actively in the response to hyperosmotic and heat shock by preventing the aggregation of stress-denatured proteins, in association with DnaK and GrpE. It is the nucleotide exchange factor for DnaK and may function as a thermosensor. Unfolded proteins bind initially to DnaJ; upon interaction with the DnaJ-bound protein, DnaK hydrolyzes its bound ATP, resulting in the formation of a stable complex. GrpE releases ADP from DnaK; ATP binding to DnaK triggers the release of the substrate protein, thus completing the reaction cycle. Several rounds of ATP-dependent interactions between DnaJ, DnaK and GrpE are required for fully efficient folding. This is Protein GrpE from Thermotoga petrophila (strain ATCC BAA-488 / DSM 13995 / JCM 10881 / RKU-1).